A 923-amino-acid chain; its full sequence is Helicase POLQ-like (923 aa).

The segment at 1–84 is disordered; that stretch reads MNRTPIRRCK…STVTPIQQKI (84 aa). Low complexity predominate over residues 43-55; that stretch reads STSPQSPSSSTEN. Positions 178–349 constitute a Helicase ATP-binding domain; sequence DKRLLDGENC…ALRAFVYSTN (172 aa). 191–198 is an ATP binding site; sequence LPTGAGKT. The DEAH box signature appears at 295-298; the sequence is DELH. The 205-residue stretch at 392–596 folds into the Helicase C-terminal domain; it reads GICQLLAKLI…CVVLKLAENI (205 aa).

Belongs to the helicase family. SKI2 subfamily.

It is found in the nucleus. Its subcellular location is the chromosome. It carries out the reaction Couples ATP hydrolysis with the unwinding of duplex DNA by translocating in the 3'-5' direction.. The catalysed reaction is ATP + H2O = ADP + phosphate + H(+). In terms of biological role, single-stranded 3'-5' DNA helicase that plays a key role in homology-driven double-strand break (DSB) repair. Involved in different DSB repair mechanisms that are guided by annealing of extensive stretches of complementary bases at break ends, such as microhomology-mediated end-joining (MMEJ), single-strand annealing (SSA) or synthesis-dependent strand annealing (SDSA). This is Helicase POLQ-like from Caenorhabditis elegans.